The primary structure comprises 428 residues: Enolase (428 aa).

Glutamine 163 lines the (2R)-2-phosphoglycerate pocket. The Proton donor role is filled by glutamate 205. Residues aspartate 242, glutamate 285, and aspartate 312 each coordinate Mg(2+). Positions 337, 366, 367, and 388 each coordinate (2R)-2-phosphoglycerate. Residue lysine 337 is the Proton acceptor of the active site.

This sequence belongs to the enolase family. Mg(2+) is required as a cofactor.

It localises to the cytoplasm. Its subcellular location is the secreted. It is found in the cell surface. It catalyses the reaction (2R)-2-phosphoglycerate = phosphoenolpyruvate + H2O. The protein operates within carbohydrate degradation; glycolysis; pyruvate from D-glyceraldehyde 3-phosphate: step 4/5. Its function is as follows. Catalyzes the reversible conversion of 2-phosphoglycerate (2-PG) into phosphoenolpyruvate (PEP). It is essential for the degradation of carbohydrates via glycolysis. This chain is Enolase, found in Novosphingobium aromaticivorans (strain ATCC 700278 / DSM 12444 / CCUG 56034 / CIP 105152 / NBRC 16084 / F199).